The following is a 590-amino-acid chain: Plasmepsin V (590 aa).

At 1-544 (MNNYFLRKEN…EKENIFLKVS (544 aa)) the chain is on the lumenal side. Residues 33–81 (CNNVENKIDNVGKKIENVGKKIGDMENKNDNVENKNDNVGNKNDNVKNA) are a coiled coil. One can recognise a Peptidase A1 domain in the interval 100-514 (YFLDIDIGKP…DLQQNQIAFI (415 aa)). D118 is a catalytic residue. 7 cysteine pairs are disulfide-bonded: C128–C211, C131–C134, C155–C166, C160–C171, C259–C518, C389–C434, and C443–C479. Residues 282–291 (KEKQKMDKSD) show a composition bias toward basic and acidic residues. Residues 282–316 (KEKQKMDKSDNNSSNKGNVSIKLKNNDKNDDEENN) are disordered. The segment covering 292–304 (NNSSNKGNVSIKL) has biased composition (low complexity). D365 is an active-site residue. The chain crosses the membrane as a helical span at residues 545–565 (YINLYCLWLLLALTILLSLIL). Topologically, residues 566–590 (YVRKMFYMDYFPLSDQNKSPIQEST) are cytoplasmic.

It belongs to the peptidase A1 family. Component of a complex composed of SPC25 and PMV; the interaction is mediated via the transmembrane domains. The complex interacts with the SEC61 channel-forming translocon complex and is involved in the recognition and import of PEXEL motif-containing proteins into the ER for subsequent export. Post-translationally, it is not clear if the zymogen has a cleavable propeptide. In vitro, appears to be cleaved between Asn-80 and Ala-81. Cleavage of the putative propeptide is dispensable for catalytic activity.

It localises to the endoplasmic reticulum membrane. Its activity is regulated as follows. Inhibited by peptidomimetic inhibitor WEHI-842. Inhibited by Cu(2+) and Hg(2+). Its function is as follows. During the asexual blood stage, plays an essential role in the export of several proteins into the host erythrocytes by cleaving the pentameric localization motif RxLxE/Q/D (termed Plasmodium export element (PEXEL)) located downstream of the N-terminal secretory signal sequence. Specifically, cleaves after the leucine residue in the RxLxE/Q/D (or RxLxxE) motif of exported proteins including RESA, EMP2, EMP3, KAHRP, RIF/Rifin and STEVOR. Also, by regulating protein export, plays an essential role in gametocyte development and thus, parasite transmission to the mosquito vector. This Plasmodium falciparum (isolate 3D7) protein is Plasmepsin V.